We begin with the raw amino-acid sequence, 513 residues long: ATP synthase subunit alpha (513 aa).

Gly169–Thr176 is a binding site for ATP.

The protein belongs to the ATPase alpha/beta chains family. As to quaternary structure, F-type ATPases have 2 components, CF(1) - the catalytic core - and CF(0) - the membrane proton channel. CF(1) has five subunits: alpha(3), beta(3), gamma(1), delta(1), epsilon(1). CF(0) has three main subunits: a(1), b(2) and c(9-12). The alpha and beta chains form an alternating ring which encloses part of the gamma chain. CF(1) is attached to CF(0) by a central stalk formed by the gamma and epsilon chains, while a peripheral stalk is formed by the delta and b chains.

It is found in the cell inner membrane. The enzyme catalyses ATP + H2O + 4 H(+)(in) = ADP + phosphate + 5 H(+)(out). In terms of biological role, produces ATP from ADP in the presence of a proton gradient across the membrane. The alpha chain is a regulatory subunit. The sequence is that of ATP synthase subunit alpha from Haemophilus influenzae (strain ATCC 51907 / DSM 11121 / KW20 / Rd).